The chain runs to 216 residues: Uracil phosphoribosyltransferase (216 aa).

5-phospho-alpha-D-ribose 1-diphosphate is bound by residues Arg-85, Arg-110, and 135-143; that span reads DPMVATGYS. Uracil is bound by residues Ile-200 and 205 to 207; that span reads GDA. Asp-206 contacts 5-phospho-alpha-D-ribose 1-diphosphate.

The protein belongs to the UPRTase family. Mg(2+) is required as a cofactor.

It carries out the reaction UMP + diphosphate = 5-phospho-alpha-D-ribose 1-diphosphate + uracil. The protein operates within pyrimidine metabolism; UMP biosynthesis via salvage pathway; UMP from uracil: step 1/1. With respect to regulation, allosterically activated by GTP. In terms of biological role, catalyzes the conversion of uracil and 5-phospho-alpha-D-ribose 1-diphosphate (PRPP) to UMP and diphosphate. The sequence is that of Uracil phosphoribosyltransferase from Paraburkholderia phytofirmans (strain DSM 17436 / LMG 22146 / PsJN) (Burkholderia phytofirmans).